Here is a 114-residue protein sequence, read N- to C-terminus: Small ribosomal subunit protein uS17 (114 aa).

This sequence belongs to the universal ribosomal protein uS17 family. Part of the 30S ribosomal subunit.

In terms of biological role, one of the primary rRNA binding proteins, it binds specifically to the 5'-end of 16S ribosomal RNA. The protein is Small ribosomal subunit protein uS17 of Aeropyrum pernix (strain ATCC 700893 / DSM 11879 / JCM 9820 / NBRC 100138 / K1).